Here is a 189-residue protein sequence, read N- to C-terminus: Peptidyl-tRNA hydrolase (189 aa).

The active-site Proton acceptor is the His-19. TRNA-binding residues include Tyr-64, Asn-66, and Asn-112.

Belongs to the PTH family. As to quaternary structure, monomer.

The protein localises to the cytoplasm. It carries out the reaction an N-acyl-L-alpha-aminoacyl-tRNA + H2O = an N-acyl-L-amino acid + a tRNA + H(+). Its function is as follows. Hydrolyzes ribosome-free peptidyl-tRNAs (with 1 or more amino acids incorporated), which drop off the ribosome during protein synthesis, or as a result of ribosome stalling. Catalyzes the release of premature peptidyl moieties from peptidyl-tRNA molecules trapped in stalled 50S ribosomal subunits, and thus maintains levels of free tRNAs and 50S ribosomes. This Gluconobacter oxydans (strain 621H) (Gluconobacter suboxydans) protein is Peptidyl-tRNA hydrolase.